We begin with the raw amino-acid sequence, 245 residues long: Tetraspanin-6 (245 aa).

Over 1 to 19 the chain is Cytoplasmic; that stretch reads MASPSRRLQTKPVITCFKS. A helical membrane pass occupies residues 20–40; sequence VLLIYTFIFWITGVILLAVGI. Residues 41–59 lie on the Extracellular side of the membrane; sequence WGKVSLENYFSLLNEKATN. The helical transmembrane segment at 60–80 threads the bilayer; the sequence is VPFVLIGTGTVIILLGTFGCF. The Cytoplasmic segment spans residues 81 to 93; that stretch reads ATCRASAWMLKLY. The chain crosses the membrane as a helical span at residues 94–114; it reads AMFLTLIFLVELVAAIIGFVF. Residues 115-208 are Extracellular-facing; it reads RHEIKNSLKN…IMVMTIIESE (94 aa). The N-linked (GlcNAc...) asparagine glycan is linked to asparagine 134. The chain crosses the membrane as a helical span at residues 209 to 229; sequence MGVVAGISFGVACFQLIGIFL. At 230–245 the chain is on the cytoplasmic side; sequence AYCLSRAITNNQYEIV.

The protein belongs to the tetraspanin (TM4SF) family.

Its subcellular location is the membrane. This is Tetraspanin-6 (TSPAN6) from Bos taurus (Bovine).